An 831-amino-acid chain; its full sequence is Zinc phosphodiesterase ELAC protein 2 (831 aa).

The N-terminal 16 residues, 1–16 (MWALRSLLRPLGLRTM), are a transit peptide targeting the mitochondrion. 2 disordered regions span residues 15-47 (TMSQGSARRPRPSKDPLRHLRTREKRGPGPGGP) and 179-227 (SERR…ANRK). Positions 186-212 (QQPSQSPRTSPNRLSPKQSSDSGSAEN) are enriched in polar residues. 5 positions are modified to phosphoserine: Ser-191, Ser-195, Ser-200, Ser-204, and Ser-732. A disordered region spans residues 791–831 (LTQQADSPEDREPQQKRAHTDEPHSPQSKKESVANTLGARV). Thr-792 bears the Phosphothreonine mark. Ser-797 and Ser-815 each carry phosphoserine. Residues 798 to 822 (PEDREPQQKRAHTDEPHSPQSKKES) are compositionally biased toward basic and acidic residues.

This sequence belongs to the RNase Z family. In terms of assembly, homodimer. Interacts with PTCD1. Zn(2+) is required as a cofactor.

The protein resides in the mitochondrion. The protein localises to the mitochondrion matrix. It localises to the mitochondrion nucleoid. It is found in the nucleus. The enzyme catalyses Endonucleolytic cleavage of RNA, removing extra 3' nucleotides from tRNA precursor, generating 3' termini of tRNAs. A 3'-hydroxy group is left at the tRNA terminus and a 5'-phosphoryl group is left at the trailer molecule.. Its function is as follows. Zinc phosphodiesterase, which displays mitochondrial tRNA 3'-processing endonuclease activity. Involved in tRNA maturation, by removing a 3'-trailer from precursor tRNA. Associates with mitochondrial DNA complexes at the nucleoids to initiate RNA processing and ribosome assembly. The polypeptide is Zinc phosphodiesterase ELAC protein 2 (Elac2) (Mus musculus (Mouse)).